Reading from the N-terminus, the 84-residue chain is Cryptic plasmid protein A (84 aa).

The protein is Cryptic plasmid protein A (cppA) of Neisseria gonorrhoeae.